Consider the following 432-residue polypeptide: Keratin, type I cytoskeletal 17 (432 aa).

Positions 1–24 (MTTSIRQFTSSSSIKGSSGLGGGS) are disordered. The head stretch occupies residues 1–83 (MTTSIRQFTS…GGVDGLLAGG (83 aa)). Ser12 and Ser13 each carry phosphoserine. Lys15 is covalently cross-linked (Glycyl lysine isopeptide (Lys-Gly) (interchain with G-Cter in SUMO1); alternate). Residue Lys15 forms a Glycyl lysine isopeptide (Lys-Gly) (interchain with G-Cter in SUMO2); alternate linkage. Ser25, Ser32, and Ser39 each carry phosphoserine. Residue Ser44 is modified to Phosphoserine; by RPS6KA1. Residues 84 to 120 (EKATMQNLNDRLASYLDKVRALEEANTELEVKIRDWY) form a coil 1A region. In terms of domain architecture, IF rod spans 84–395 (EKATMQNLND…RLLEGEDAHL (312 aa)). Positions 102 to 116 (VRALEEANTELEVKI) are peptide epitope S1; induces T-cell and keratinocyte proliferation and IFN-gamma production. Residue Thr110 is modified to Phosphothreonine. The segment at 121-138 (QRQAPGPARDYSQYYRTI) is linker 1. Positions 139-230 (EELQNKILTA…NHEEEMNALR (92 aa)) are coil 1B. The segment at 153–167 (ANILLQIDNARLAAD) is peptide epitope S2; induces T-cell proliferation and IFN-gamma production. The linker 12 stretch occupies residues 231–250 (GQVGGEINVEMDAAPGVDLS). The coil 2 stretch occupies residues 251–392 (RILNEMRDQY…TYRRLLEGED (142 aa)). Residue Lys278 forms a Glycyl lysine isopeptide (Lys-Gly) (interchain with G-Cter in SUMO2) linkage. Position 279 is a phosphothreonine (Thr279). At Ser323 the chain carries Phosphoserine. The segment at 332–346 (ENRYCVQLSQIQGLI) is peptide epitope S4; induces T-cell and keratinocyte proliferation and IFN-gamma production. The tract at residues 393–432 (AHLTQYKKEPVTTRQVRTIVEEVQDGKVISSREQVHQTTR) is tail. Glycyl lysine isopeptide (Lys-Gly) (interchain with G-Cter in SUMO1); alternate cross-links involve residues Lys399, Lys400, and Lys419. Residues Lys399, Lys400, and Lys419 each participate in a glycyl lysine isopeptide (Lys-Gly) (interchain with G-Cter in SUMO2); alternate cross-link.

Belongs to the intermediate filament family. Heterodimer of a type I and a type II keratin. KRT17 associates with KRT6 isomers (KRT6A or KRT6B). Interacts with TRADD and SFN. Phosphorylation at Ser-44 occurs in a growth- and stress-dependent fashion in skin keratinocytes, it has no effect on filament organization. As to expression, expressed in the outer root sheath and medulla region of hair follicle specifically from eyebrow and beard, digital pulp, nail matrix and nail bed epithelium, mucosal stratified squamous epithelia and in basal cells of oral epithelium, palmoplantar epidermis and sweat and mammary glands. Also expressed in myoepithelium of prostate, basal layer of urinary bladder, cambial cells of sebaceous gland and in exocervix (at protein level).

Its subcellular location is the cytoplasm. Functionally, type I keratin involved in the formation and maintenance of various skin appendages, specifically in determining shape and orientation of hair. Required for the correct growth of hair follicles, in particular for the persistence of the anagen (growth) state. Modulates the function of TNF-alpha in the specific context of hair cycling. Regulates protein synthesis and epithelial cell growth through binding to the adapter protein SFN and by stimulating Akt/mTOR pathway. Involved in tissue repair. May be a marker of basal cell differentiation in complex epithelia and therefore indicative of a certain type of epithelial 'stem cells'. Acts as a promoter of epithelial proliferation by acting a regulator of immune response in skin: promotes Th1/Th17-dominated immune environment contributing to the development of basaloid skin tumors. May act as an autoantigen in the immunopathogenesis of psoriasis, with certain peptide regions being a major target for autoreactive T-cells and hence causing their proliferation. The polypeptide is Keratin, type I cytoskeletal 17 (KRT17) (Homo sapiens (Human)).